The sequence spans 651 residues: p-hydroxybenzoic acid efflux pump subunit AaeB (651 aa).

The next 11 helical transmembrane spans lie at 11 to 31 (FAFK…HLQL), 41 to 61 (AAIV…SGAI), 67 to 87 (LRII…VLTI), 91 to 111 (VLTL…SSLV), 119 to 139 (FGLA…TPLL), 150 to 170 (EIVL…PRSI), 368 to 388 (LFWL…IAVV), 405 to 425 (FLLG…FIIP), 429 to 449 (QSML…GIEV), 460 to 480 (LAST…VSLF), and 481 to 501 (LDSA…LLLI).

Belongs to the aromatic acid exporter ArAE (TC 2.A.85) family.

It is found in the cell inner membrane. In terms of biological role, forms an efflux pump with AaeA. Could function as a metabolic relief valve, allowing to eliminate certain compounds when they accumulate to high levels in the cell. This chain is p-hydroxybenzoic acid efflux pump subunit AaeB, found in Yersinia enterocolitica serotype O:8 / biotype 1B (strain NCTC 13174 / 8081).